The following is a 182-amino-acid chain: Large ribosomal subunit protein uL6 (182 aa).

This sequence belongs to the universal ribosomal protein uL6 family. In terms of assembly, part of the 50S ribosomal subunit.

In terms of biological role, this protein binds to the 23S rRNA, and is important in its secondary structure. It is located near the subunit interface in the base of the L7/L12 stalk, and near the tRNA binding site of the peptidyltransferase center. This chain is Large ribosomal subunit protein uL6, found in Dehalococcoides mccartyi (strain ATCC BAA-2266 / KCTC 15142 / 195) (Dehalococcoides ethenogenes (strain 195)).